A 271-amino-acid chain; its full sequence is Acetyl-coenzyme A carboxylase carboxyl transferase subunit alpha (271 aa).

Positions 1–247 (MSRELIRTAD…KKTILEALGE (247 aa)) constitute a CoA carboxyltransferase C-terminal domain.

This sequence belongs to the AccA family. As to quaternary structure, acetyl-CoA carboxylase is a heterohexamer composed of biotin carboxyl carrier protein (AccB), biotin carboxylase (AccC) and two subunits each of ACCase subunit alpha (AccA) and ACCase subunit beta (AccD).

The protein localises to the cytoplasm. It carries out the reaction N(6)-carboxybiotinyl-L-lysyl-[protein] + acetyl-CoA = N(6)-biotinyl-L-lysyl-[protein] + malonyl-CoA. The protein operates within lipid metabolism; malonyl-CoA biosynthesis; malonyl-CoA from acetyl-CoA: step 1/1. Its function is as follows. Component of the acetyl coenzyme A carboxylase (ACC) complex. First, biotin carboxylase catalyzes the carboxylation of biotin on its carrier protein (BCCP) and then the CO(2) group is transferred by the carboxyltransferase to acetyl-CoA to form malonyl-CoA. The polypeptide is Acetyl-coenzyme A carboxylase carboxyl transferase subunit alpha (Clostridium perfringens (strain 13 / Type A)).